Here is a 388-residue protein sequence, read N- to C-terminus: Methylthioribose-1-phosphate isomerase (388 aa).

The active-site Proton donor is Asp-253.

The protein belongs to the eIF-2B alpha/beta/delta subunits family. MtnA subfamily.

The protein localises to the cytoplasm. The protein resides in the nucleus. It catalyses the reaction 5-(methylsulfanyl)-alpha-D-ribose 1-phosphate = 5-(methylsulfanyl)-D-ribulose 1-phosphate. It participates in amino-acid biosynthesis; L-methionine biosynthesis via salvage pathway; L-methionine from S-methyl-5-thio-alpha-D-ribose 1-phosphate: step 1/6. Catalyzes the interconversion of methylthioribose-1-phosphate (MTR-1-P) into methylthioribulose-1-phosphate (MTRu-1-P). This chain is Methylthioribose-1-phosphate isomerase, found in Fusarium vanettenii (strain ATCC MYA-4622 / CBS 123669 / FGSC 9596 / NRRL 45880 / 77-13-4) (Fusarium solani subsp. pisi).